The chain runs to 484 residues: Regulatory protein ViaA (484 aa).

Belongs to the ViaA family. In terms of assembly, homodimer. Interacts with RavA.

The protein resides in the cytoplasm. Functionally, component of the RavA-ViaA chaperone complex, which may act on the membrane to optimize the function of some of the respiratory chains. ViaA stimulates the ATPase activity of RavA. The sequence is that of Regulatory protein ViaA from Edwardsiella ictaluri (strain 93-146).